A 34-amino-acid polypeptide reads, in one-letter code: Photosystem II reaction center protein T (34 aa).

Residues 3–23 (SVAYILIFTLTIGTLFFAVAF) traverse the membrane as a helical segment.

The protein belongs to the PsbT family. As to quaternary structure, PSII is composed of 1 copy each of membrane proteins PsbA, PsbB, PsbC, PsbD, PsbE, PsbF, PsbH, PsbI, PsbJ, PsbK, PsbL, PsbM, PsbT, PsbX, PsbY, PsbZ, Psb30/Ycf12, peripheral proteins PsbO, CyanoQ (PsbQ), PsbU, PsbV and a large number of cofactors. It forms dimeric complexes.

Its subcellular location is the cellular thylakoid membrane. In terms of biological role, found at the monomer-monomer interface of the photosystem II (PS II) dimer, plays a role in assembly and dimerization of PSII. PSII is a light-driven water plastoquinone oxidoreductase, using light energy to abstract electrons from H(2)O, generating a proton gradient subsequently used for ATP formation. The sequence is that of Photosystem II reaction center protein T from Mastigocladus laminosus (Fischerella sp.).